Here is a 362-residue protein sequence, read N- to C-terminus: Aminomethyltransferase (362 aa).

The protein belongs to the GcvT family. The glycine cleavage system is composed of four proteins: P, T, L and H.

It carries out the reaction N(6)-[(R)-S(8)-aminomethyldihydrolipoyl]-L-lysyl-[protein] + (6S)-5,6,7,8-tetrahydrofolate = N(6)-[(R)-dihydrolipoyl]-L-lysyl-[protein] + (6R)-5,10-methylene-5,6,7,8-tetrahydrofolate + NH4(+). Functionally, the glycine cleavage system catalyzes the degradation of glycine. In Bacillus subtilis (strain 168), this protein is Aminomethyltransferase.